The primary structure comprises 1537 residues: DNA-directed RNA polymerase subunit beta' (1537 aa).

The Zn(2+) site is built by cysteine 57, cysteine 59, cysteine 72, and cysteine 75. Mg(2+)-binding residues include aspartate 746, aspartate 748, and aspartate 750. The Zn(2+) site is built by cysteine 1120, cysteine 1201, cysteine 1208, and cysteine 1211. The segment at 1502–1537 (LEKYGQTSVSTDAVTGSQRYDDTRPSSTSINPSYGD) is disordered. Polar residues-rich tracts occupy residues 1506-1519 (GQTS…TGSQ) and 1526-1537 (PSSTSINPSYGD).

Belongs to the RNA polymerase beta' chain family. The RNAP catalytic core consists of 2 alpha, 1 beta, 1 beta' and 1 omega subunit. When a sigma factor is associated with the core the holoenzyme is formed, which can initiate transcription. Mg(2+) serves as cofactor. Requires Zn(2+) as cofactor.

It catalyses the reaction RNA(n) + a ribonucleoside 5'-triphosphate = RNA(n+1) + diphosphate. DNA-dependent RNA polymerase catalyzes the transcription of DNA into RNA using the four ribonucleoside triphosphates as substrates. The sequence is that of DNA-directed RNA polymerase subunit beta' from Deinococcus geothermalis (strain DSM 11300 / CIP 105573 / AG-3a).